The sequence spans 461 residues: MLKIFNTLTRQKEEFKPIHAGEVGMYVCGITVYDLCHIGHGRTFVAFDVVARYLRFLGYKLKYVRNITDIDDKIIKRANENGESFVALVDRMIAEMHKDFDALNILRPDMEPRATHHIAEIIELTEQLIAKGHAYVADNGDVMFDVPTDPTYGVLSRQDLDQLQAGARVDVVDDKRNPMDFVLWKMSKEGEPSWPSPWGAGRPGWHIECSAMNCKQLGNHFDIHGGGSDLMFPHHENEIAQSTCAHDGQYVNYWMHSGMVMVDREKMSKSLGNFFTVRDVLKYYDAETVRYFLMSGHYRSQLNYSEENLKQARAALERLYTALRGTDKTVAPAGGEAFEARFIEAMNDDFNTPEAYSVLFDMAREVNRLKAEDMAAANAMASHLRKLSAVLGLLEQEPEAFLQSGAQADDSEVAEIEALIQQRLDARKAKDWAAADAARDRLNEMGIVLEDGPQGTTWRRK.

A Zn(2+)-binding site is contributed by Cys28. Residues 30–40 (ITVYDLCHIGH) carry the 'HIGH' region motif. Zn(2+)-binding residues include Cys209, His234, and Glu238. A 'KMSKS' region motif is present at residues 266-270 (KMSKS). Lys269 contacts ATP.

This sequence belongs to the class-I aminoacyl-tRNA synthetase family. As to quaternary structure, monomer. Zn(2+) serves as cofactor.

The protein localises to the cytoplasm. It catalyses the reaction tRNA(Cys) + L-cysteine + ATP = L-cysteinyl-tRNA(Cys) + AMP + diphosphate. This Escherichia coli (strain SMS-3-5 / SECEC) protein is Cysteine--tRNA ligase.